The primary structure comprises 384 residues: Endoglucanase (384 aa).

The signal sequence occupies residues 1–25 (MTRRRLLHAGTLAGVAALLPAAALA). E63 (proton donor) is an active-site residue. The Nucleophile role is filled by D124.

This sequence belongs to the glycosyl hydrolase 8 (cellulase D) family.

The protein resides in the secreted. The enzyme catalyses Endohydrolysis of (1-&gt;4)-beta-D-glucosidic linkages in cellulose, lichenin and cereal beta-D-glucans.. It participates in glycan metabolism; bacterial cellulose biosynthesis. In terms of biological role, hydrolyzes carboxymethylcellulose. The protein is Endoglucanase (bcsZ) of Xanthomonas axonopodis pv. citri (strain 306).